Consider the following 395-residue polypeptide: Beta-1,4-galactosyltransferase 3 (395 aa).

Residues 1-10 (MLRRLLERPC) lie on the Cytoplasmic side of the membrane. Residues 11–31 (TLALLVGSQLAVMMYLSLGGF) traverse the membrane as a helical; Signal-anchor for type II membrane protein segment. Residues 32 to 395 (RSLSALFGRD…ANHTAPRGSH (364 aa)) are Lumenal-facing. Asparagine 57 carries an N-linked (GlcNAc...) asparagine glycan. A disulfide bridge connects residues cysteine 79 and cysteine 121. UDP-alpha-D-galactose is bound at residue 132 to 136 (PHRAR). Asparagine 168 carries N-linked (GlcNAc...) asparagine glycosylation. UDP-alpha-D-galactose-binding positions include 171–173 (FNR), 198–199 (VD), tyrosine 228, and tryptophan 260. Cysteines 192 and 211 form a disulfide. Position 199 (aspartate 199) interacts with Mn(2+). N-acetyl-D-glucosamine is bound at residue 262 to 265 (GEDD). A Mn(2+)-binding site is contributed by histidine 293. 293–295 (HRG) lines the UDP-alpha-D-galactose pocket. Residue arginine 305 participates in N-acetyl-D-glucosamine binding. An N-linked (GlcNAc...) asparagine glycan is attached at asparagine 339. Residues 340 to 395 (ITADIGTDPRGPRSPSGPRYPPGSSQAFRQEMLQRRPPARPGPLPTANHTAPRGSH) form a disordered region. Over residues 352 to 364 (RSPSGPRYPPGSS) the composition is skewed to low complexity. A glycan (N-linked (GlcNAc...) asparagine) is linked at asparagine 387.

This sequence belongs to the glycosyltransferase 7 family. Requires Mn(2+) as cofactor.

It localises to the golgi apparatus. The protein resides in the golgi stack membrane. The enzyme catalyses an N-acetyl-beta-D-glucosaminyl derivative + UDP-alpha-D-galactose = a beta-D-galactosyl-(1-&gt;4)-N-acetyl-beta-D-glucosaminyl derivative + UDP + H(+). It carries out the reaction N-acetyl-D-glucosamine + UDP-alpha-D-galactose = beta-D-galactosyl-(1-&gt;4)-N-acetyl-D-glucosamine + UDP + H(+). The catalysed reaction is a beta-D-GlcNAc-(1-&gt;3)-beta-D-Gal-(1-&gt;4)-beta-D-Glc-(1&lt;-&gt;1)-Cer(d18:1(4E)) + UDP-alpha-D-galactose = a neolactoside nLc4Cer(d18:1(4E)) + UDP + H(+). It catalyses the reaction a beta-D-glucosylceramide + UDP-alpha-D-galactose = a beta-D-galactosyl-(1-&gt;4)-beta-D-glucosyl-(1&lt;-&gt;1)-ceramide + UDP + H(+). The enzyme catalyses a neolactoside IV(3)-beta-GlcNAc-nLc4Cer + UDP-alpha-D-galactose = a neolactoside nLc6Cer + UDP + H(+). Its pathway is protein modification; protein glycosylation. Its function is as follows. Responsible for the synthesis of complex-type N-linked oligosaccharides in many glycoproteins as well as the carbohydrate moieties of glycolipids. In Mus musculus (Mouse), this protein is Beta-1,4-galactosyltransferase 3.